Here is an 871-residue protein sequence, read N- to C-terminus: Dual O-methyltransferase/FAD-dependent monooxygenase CTB3 (871 aa).

The interval 1-429 (MMQFQRDLEA…GLLTVRSAGQ (429 aa)) is O-methyltransferase. Residue aspartate 279 coordinates S-adenosyl-L-methionine. The active-site Proton acceptor is the histidine 331. The interval 430–871 (TALSGTNTLT…NLVDCSEFVF (442 aa)) is FAD-dependent monooxygenase. Residues glutamate 485, arginine 569, aspartate 793, and alanine 806 each coordinate FAD.

In the C-terminal section; belongs to the paxM FAD-dependent monooxygenase family. It in the N-terminal section; belongs to the class I-like SAM-binding methyltransferase superfamily. Cation-independent O-methyltransferase family. COMT subfamily.

It carries out the reaction nor-toralactone + S-adenosyl-L-methionine = toralactone + S-adenosyl-L-homocysteine + H(+). The catalysed reaction is toralactone + NADH + O2 + H(+) = 1-(3,4,5-trihydroxy-7-methoxynaphthalen-2-yl)propan-2-one + CO2 + NAD(+). The protein operates within mycotoxin biosynthesis. Functionally, dual O-methyltransferase/FAD-dependent monooxygenase; part of the gene cluster that mediates the biosynthesis of cercosporin, a light-activated, non-host-selective toxin. The perylenequinone chromophore of cercosporin absorbs light energy to attain an electronically-activated triplet state and produces active oxygen species such as the hydroxyl radical, superoxide, hydrogen peroxide or singlet oxygen upon reaction with oxygen molecules. These reactive oxygen species cause damage to various cellular components including lipids, proteins and nucleic acids. The first step of cercosporin biosynthesis is performed by the polyketide synthase CTB1 which catalyzes the formation of nor-toralactone. The starter unit acyltransferase (SAT) domain of CTB1 initiates polyketide extension by the selective utilization of acetyl-CoA, which is elongated to the heptaketide in the beta-ketoacyl synthase (KS) domain by successive condensations with six malonyl units introduced by the malonyl acyltransferase (MAT) domain. The product template (PT) domain catalyzes C4-C9 and C2-C11 aldol cyclizations and dehydrations to a trihydroxynaphthalene, which is thought to be delivered to the thioesterase (TE) domain for product release. The bifunctional enzyme CTB3 then methylates nor-toralactone to toralactone before conducting an unusual oxidative aromatic ring opening. The O-methyltransferase CTB2 further methylates the nascent OH-6 of the CBT3 product, blocking further oxidation at this site before the reductase CTB6 reduces the 2-oxopropyl ketone at position C7, giving naphthalene. The FAD-dependent monooxygenase CTB5 in concert with the multicopper oxidase CTB12 are responsible for homodimerization of naphthalene with CTB7 installing the dioxepine moiety, finally producing cercosporin. The fasciclin domain-containing protein CTB11 might act with CTB5 and CTB12 whereas the roles of CTB9 and CTB10 have still to be elucidated. This Cercospora beticola (Sugarbeet leaf spot fungus) protein is Dual O-methyltransferase/FAD-dependent monooxygenase CTB3.